The sequence spans 365 residues: Flagellar P-ring protein (365 aa).

Positions 1–21 (MIKRIISIVFLLLTLPQLALA) are cleaved as a signal peptide.

It belongs to the FlgI family. As to quaternary structure, the basal body constitutes a major portion of the flagellar organelle and consists of four rings (L,P,S, and M) mounted on a central rod.

The protein localises to the periplasm. Its subcellular location is the bacterial flagellum basal body. Its function is as follows. Assembles around the rod to form the L-ring and probably protects the motor/basal body from shearing forces during rotation. In Geobacter metallireducens (strain ATCC 53774 / DSM 7210 / GS-15), this protein is Flagellar P-ring protein.